The following is a 130-amino-acid chain: Small ribosomal subunit protein uS8z/uS8w (130 aa).

It belongs to the universal ribosomal protein uS8 family.

It localises to the cytoplasm. The protein is Small ribosomal subunit protein uS8z/uS8w (RPS15AA) of Arabidopsis thaliana (Mouse-ear cress).